The chain runs to 227 residues: Ubiquitin domain-containing protein 1 (227 aa).

The segment at 1–42 is disordered; that stretch reads MGNCVGRQRRERPAAPGHPRKRAGRNEPLKKERLKWKSDYPM. A compositionally biased stretch (basic and acidic residues) spans 24 to 38; sequence GRNEPLKKERLKWKS. The 76-residue stretch at 149–224 folds into the Ubiquitin-like domain; it reads FPLKVRLSTG…IQVIINQPPP (76 aa).

In terms of assembly, interacts with UBTD1.

May be involved in the regulation of cellular senescence through a positive feedback loop with TP53. Is a TP53 downstream target gene that increases the stability of TP53 protein by promoting the ubiquitination and degradation of MDM2. This chain is Ubiquitin domain-containing protein 1 (Ubtd1), found in Mus musculus (Mouse).